The sequence spans 280 residues: DegV domain-containing protein spyM18_1709 (280 aa).

In terms of domain architecture, DegV spans 3-280 (WKIVTDSGCD…DGGLLMGYEI (278 aa)). Positions 63 and 91 each coordinate hexadecanoate.

Functionally, may bind long-chain fatty acids, such as palmitate, and may play a role in lipid transport or fatty acid metabolism. The chain is DegV domain-containing protein spyM18_1709 from Streptococcus pyogenes serotype M18 (strain MGAS8232).